The primary structure comprises 1114 residues: Isoleucine--tRNA ligase (1114 aa).

Residues 61–71 (PTANGQPGTHH) carry the 'HIGH' region motif. The short motif at 640-644 (KMSKH) is the 'KMSKS' region element. K643 provides a ligand contact to ATP.

It belongs to the class-I aminoacyl-tRNA synthetase family. IleS type 2 subfamily. As to quaternary structure, monomer. Requires Zn(2+) as cofactor.

It is found in the cytoplasm. It carries out the reaction tRNA(Ile) + L-isoleucine + ATP = L-isoleucyl-tRNA(Ile) + AMP + diphosphate. Functionally, catalyzes the attachment of isoleucine to tRNA(Ile). As IleRS can inadvertently accommodate and process structurally similar amino acids such as valine, to avoid such errors it has two additional distinct tRNA(Ile)-dependent editing activities. One activity is designated as 'pretransfer' editing and involves the hydrolysis of activated Val-AMP. The other activity is designated 'posttransfer' editing and involves deacylation of mischarged Val-tRNA(Ile). This Cutibacterium acnes (strain DSM 16379 / KPA171202) (Propionibacterium acnes) protein is Isoleucine--tRNA ligase.